The primary structure comprises 54 residues: Ribulose bisphosphate carboxylase large chain (54 aa).

A propeptide spanning residues 1–2 is cleaved from the precursor; the sequence is MS. N-acetylproline is present on proline 3. Position 14 is an N6,N6,N6-trimethyllysine (lysine 14).

It belongs to the RuBisCO large chain family. Type I subfamily. In terms of assembly, heterohexadecamer of 8 large chains and 8 small chains.

Its subcellular location is the plastid. The protein localises to the chloroplast. The enzyme catalyses 2 (2R)-3-phosphoglycerate + 2 H(+) = D-ribulose 1,5-bisphosphate + CO2 + H2O. It carries out the reaction D-ribulose 1,5-bisphosphate + O2 = 2-phosphoglycolate + (2R)-3-phosphoglycerate + 2 H(+). Functionally, ruBisCO catalyzes two reactions: the carboxylation of D-ribulose 1,5-bisphosphate, the primary event in carbon dioxide fixation, as well as the oxidative fragmentation of the pentose substrate in the photorespiration process. Both reactions occur simultaneously and in competition at the same active site. The chain is Ribulose bisphosphate carboxylase large chain (rbcL) from Colletia hystrix (Crucifixion thorn).